We begin with the raw amino-acid sequence, 423 residues long: Probable sodium/metabolite cotransporter BASS4, chloroplastic (423 aa).

The transit peptide at 1–55 (MVTTHHLCLLRSTVLSVPVRLRAPRAPPHPRLPTASASASSYHGPTHLRRLRPLR) directs the protein to the chloroplast. The interval 23–45 (APRAPPHPRLPTASASASSYHGP) is disordered. A run of 9 helical transmembrane segments spans residues 96 to 116 (FLPLALIAGIALALMDPTLGC), 123 to 140 (LSKYSTFGIFLISGLTLR), 153 to 173 (AGLFGLASILLFTPFLAQFIM), 182 to 202 (FITGLAMFCCMPTTLSSGVTL), 212 to 232 (LALAMTAISNLLGIMIVPLSL), 244 to 264 (LPTEKLFKSLVTTLLIPIILG), 284 to 301 (GFSVTSAILLSLVPWIQV), 315 to 335 (AFAVAVTVGVLLHFALLAFNA), and 389 to 409 (LLVIPCVAAHINQIIIDSIIV).

The protein belongs to the bile acid:sodium symporter (BASS) (TC 2.A.28) family.

It is found in the membrane. Its subcellular location is the plastid. The protein resides in the chloroplast envelope. Functionally, may function as sodium-coupled metabolite transporter across the chloroplast envelope. This chain is Probable sodium/metabolite cotransporter BASS4, chloroplastic (BASS4), found in Oryza sativa subsp. indica (Rice).